A 381-amino-acid polypeptide reads, in one-letter code: Cytochrome b (381 aa).

The next 4 membrane-spanning stretches (helical) occupy residues 34-54, 78-99, 114-134, and 179-199; these read FGSL…FLAM, WLIR…YFHI, WNIG…GYVL, and FFAF…IHIL. Residues histidine 84 and histidine 98 each coordinate heme b. Residues histidine 183 and histidine 197 each coordinate heme b. Histidine 202 is an a ubiquinone binding site. Transmembrane regions (helical) follow at residues 227-247, 289-309, 321-341, and 348-368; these read YKDA…ALFL, LGGV…PFLH, LTQV…WIGG, and FILI…IAIP.

The protein belongs to the cytochrome b family. In terms of assembly, the cytochrome bc1 complex contains 3 respiratory subunits (MT-CYB, CYC1 and UQCRFS1), 2 core proteins (UQCRC1 and UQCRC2) and probably 6 low-molecular weight proteins. Heme b serves as cofactor.

It is found in the mitochondrion inner membrane. Its function is as follows. Component of the ubiquinol-cytochrome c reductase complex (complex III or cytochrome b-c1 complex) that is part of the mitochondrial respiratory chain. The b-c1 complex mediates electron transfer from ubiquinol to cytochrome c. Contributes to the generation of a proton gradient across the mitochondrial membrane that is then used for ATP synthesis. The sequence is that of Cytochrome b (mt-cyb) from Carcharodon carcharias (Great white shark).